We begin with the raw amino-acid sequence, 807 residues long: FAD-linked oxidoreductase pytB (807 aa).

Positions 1–18 are cleaved as a signal peptide; that stretch reads MRFLGIAAVATFSTVVSA. 8 N-linked (GlcNAc...) asparagine glycosylation sites follow: Asn-45, Asn-106, Asn-120, Asn-242, Asn-295, Asn-351, Asn-419, and Asn-699. The FAD-binding PCMH-type domain occupies 60-231; that stretch reads FDELPVLLAY…VEFTLSLTSI (172 aa).

The protein belongs to the oxygen-dependent FAD-linked oxidoreductase family. The cofactor is FAD.

The protein operates within secondary metabolite biosynthesis. Functionally, FAD-linked oxidoreductase; part of the gene cluster that mediates the biosynthesis of pyranterreones, a family of antioxidative compounds. The first step of pyranonigrins biosynthesis is performed by the hybrid PKS-NRPS synthetase pytA that condenses 4 malonyl-CoA units ato the acetyl starter unit by the modular PKS of pytA. The acyl chain is then connected to an L-serine through the amide bond by the modular NRPS of pytA. A tetramic acid is formed and released from the PKS-NRPS pytA to give pyranterreone 5 with the help of the thioesterase pytI. Pyranterreone 5 could be methylated by pytC to afford pyranterreone 6. Both pyranterreones 5 and 6 are subsequently oxidized by the FAD-linked oxidoreductase pytB and the cytochrome P450 monooxygenase pytD to form the fused gamma-pyrone core, resulting in pyranterreones 7 and 11, respectively. The hydroxy group at C-8 of pyranterreones 7 and 11 are dehydrated by the aspartyl protease pytH to form a delta-7 double bond to give pyranterreones 3 and 1, 2 accordingly. The exo-methylene of pyranterreone 3 could be reduced into a pendant methyl by reductase pytE to provide pyranterreone 4, also known as cordylactam. Pyranterreone 4 can be reconverted to pyranterreone 3 through pytB-catalyzed dehydrogenation or further oxidized to pyranterreones 9 and 10. The protein is FAD-linked oxidoreductase pytB of Aspergillus terreus (strain NIH 2624 / FGSC A1156).